The chain runs to 200 residues: MKILITGFDPFGGEKINPAIEAVKKLPDEIDGHQIIKLEVPTIFYESARVVKNAIEKYQPDMVINVGQAGGRAAITPERIAINFQSGSTPDNSGKGPKEGKIEADGADGYFTQLPIKKMVTATRKAGVPSEISNSAGNYVCNHLFYELQYMRVHEFPNLKTGFIHIPFLPSQVKNGRHPSMSLSYMVKGLTASIKAAVDA.

Residues Glu78, Cys141, and His165 contribute to the active site.

It belongs to the peptidase C15 family. In terms of assembly, homotetramer.

It is found in the cytoplasm. The catalysed reaction is Release of an N-terminal pyroglutamyl group from a polypeptide, the second amino acid generally not being Pro.. In terms of biological role, removes 5-oxoproline from various penultimate amino acid residues except L-proline. In Lactobacillus acidophilus (strain ATCC 700396 / NCK56 / N2 / NCFM), this protein is Pyrrolidone-carboxylate peptidase.